A 373-amino-acid polypeptide reads, in one-letter code: MHNSAPITRRKSKRIYVGKVLVGDGAPIAVQSMTNTCTTDVAATVQQIQALERVGVDIVRVSVPTMDAAEAFKLIKQQVAVPLVADIHFDYRIALKVAEYGVDCLRINPGNIGNEGRIRSVVDCARDNNIPIRIGVNAGSLERDLQEKYGEPTPEALLESAMRHVDILDRLNFDTFKVSVKASDVFLAVQSYRLLASRIDQPLHLGITEAGGARSGAVKSAIGLGLLLSEGIGDTLRISLAADPVEEVKVGFDILKSLRIRARGINFIACPTCSRQEFDVIGTVNALEQRLEDIVTPMDVSIIGCVVNGPGEALVSTLGVTGGHNKSGYYEDGVRQRERFDNELMIDQLEARIRAKAAMLDENNRITVNLIEK.

[4Fe-4S] cluster is bound by residues C270, C273, C305, and E312.

This sequence belongs to the IspG family. The cofactor is [4Fe-4S] cluster.

The catalysed reaction is (2E)-4-hydroxy-3-methylbut-2-enyl diphosphate + oxidized [flavodoxin] + H2O + 2 H(+) = 2-C-methyl-D-erythritol 2,4-cyclic diphosphate + reduced [flavodoxin]. The protein operates within isoprenoid biosynthesis; isopentenyl diphosphate biosynthesis via DXP pathway; isopentenyl diphosphate from 1-deoxy-D-xylulose 5-phosphate: step 5/6. Converts 2C-methyl-D-erythritol 2,4-cyclodiphosphate (ME-2,4cPP) into 1-hydroxy-2-methyl-2-(E)-butenyl 4-diphosphate. The polypeptide is 4-hydroxy-3-methylbut-2-en-1-yl diphosphate synthase (flavodoxin) (Sodalis glossinidius (strain morsitans)).